Here is a 397-residue protein sequence, read N- to C-terminus: Na(+)/H(+) antiporter NhaA 1 (397 aa).

The next 12 helical transmembrane spans lie at 15–35 (FQLEAASGLLLIAAAVLALII), 42–62 (YLYGGLLEVPVAVQVGALNIA), 65–85 (LLLWINDGLMALFFLLIGLEV), 101–121 (ILPATAAVGGMVVPALIYWFI), 129–149 (VAGWAIPTATDIAFALGVLAL), 160–180 (LFLMTLAIIDDLGAIIVIALF), 183–203 (GTLSSVSLLLAAACLLVLVAM), 219–241 (LILWVCVLKSGVHATLAGVALAF), 265–285 (WVAYAILPIFAFANAGVSLAG), 299–319 (ITIGLLLGKTVGVFGLTWVAV), 335–355 (ILGVAILCGIGFTMSLFVGSL), and 370–390 (MGILTGSFFAAVIGYAVTAMA).

The protein belongs to the NhaA Na(+)/H(+) (TC 2.A.33) antiporter family.

It localises to the cell inner membrane. It carries out the reaction Na(+)(in) + 2 H(+)(out) = Na(+)(out) + 2 H(+)(in). Na(+)/H(+) antiporter that extrudes sodium in exchange for external protons. The sequence is that of Na(+)/H(+) antiporter NhaA 1 from Pseudomonas putida (strain ATCC 47054 / DSM 6125 / CFBP 8728 / NCIMB 11950 / KT2440).